The chain runs to 204 residues: Large ribosomal subunit protein bL25 (204 aa).

Belongs to the bacterial ribosomal protein bL25 family. CTC subfamily. As to quaternary structure, part of the 50S ribosomal subunit; part of the 5S rRNA/L5/L18/L25 subcomplex. Contacts the 5S rRNA. Binds to the 5S rRNA independently of L5 and L18.

This is one of the proteins that binds to the 5S RNA in the ribosome where it forms part of the central protuberance. This is Large ribosomal subunit protein bL25 from Pseudoalteromonas translucida (strain TAC 125).